Here is a 904-residue protein sequence, read N- to C-terminus: NADH-quinone oxidoreductase subunit G (904 aa).

The 83-residue stretch at 1-83 (MATIHVDGKA…GTWISIDDEE (83 aa)) folds into the 2Fe-2S ferredoxin-type domain. Residues C34, C45, C48, and C67 each contribute to the [2Fe-2S] cluster site. The 4Fe-4S His(Cys)3-ligated-type domain maps to 83-122 (ESKAFRASVVEWLMTNHPHDCPVCEEGGHCHLQDMTVMTG). 12 residues coordinate [4Fe-4S] cluster: H99, C103, C106, C112, C151, C154, C157, C201, C228, C231, C235, and C263. One can recognise a 4Fe-4S Mo/W bis-MGD-type domain in the interval 221-277 (MQFAPSICHGCSSGCNISPGERYGELRRIENRFNGSVNQYFLCDRGRFGYGYVNRKD).

This sequence belongs to the complex I 75 kDa subunit family. Composed of 13 different subunits. Subunits NuoCD, E, F, and G constitute the peripheral sector of the complex. [2Fe-2S] cluster is required as a cofactor. [4Fe-4S] cluster serves as cofactor.

It catalyses the reaction a quinone + NADH + 5 H(+)(in) = a quinol + NAD(+) + 4 H(+)(out). NDH-1 shuttles electrons from NADH, via FMN and iron-sulfur (Fe-S) centers, to quinones in the respiratory chain. The immediate electron acceptor for the enzyme in this species is believed to be ubiquinone. Couples the redox reaction to proton translocation (for every two electrons transferred, four hydrogen ions are translocated across the cytoplasmic membrane), and thus conserves the redox energy in a proton gradient. This is NADH-quinone oxidoreductase subunit G (nuoG) from Pseudomonas putida (strain ATCC 47054 / DSM 6125 / CFBP 8728 / NCIMB 11950 / KT2440).